Here is a 260-residue protein sequence, read N- to C-terminus: Snake venom serine protease serpentokallikrein-1 (260 aa).

An N-terminal signal peptide occupies residues 1–18 (MVLIRVLANLLILQLSYA). Residues 19–24 (QRTSEL) constitute a propeptide that is removed on maturation. Residues 25-251 (VIGGDECNIN…HLDWIKSIIA (227 aa)) form the Peptidase S1 domain. 6 disulfide bridges follow: cysteine 31-cysteine 165, cysteine 52-cysteine 68, cysteine 102-cysteine 258, cysteine 144-cysteine 212, cysteine 176-cysteine 191, and cysteine 202-cysteine 227. Histidine 67 (charge relay system) is an active-site residue. Residues asparagine 81 and asparagine 105 are each glycosylated (N-linked (GlcNAc...) asparagine). Aspartate 112 (charge relay system) is an active-site residue. Residues asparagine 156 and asparagine 172 are each glycosylated (N-linked (GlcNAc...) asparagine). The Charge relay system role is filled by serine 206.

The protein belongs to the peptidase S1 family. Snake venom subfamily. Monomer. As to expression, expressed by the venom gland.

The protein localises to the secreted. Its function is as follows. Snake venom serine protease that may act in the hemostasis system of the prey. The polypeptide is Snake venom serine protease serpentokallikrein-1 (Protobothrops mucrosquamatus (Taiwan habu)).